The primary structure comprises 424 residues: Tubulin-specific chaperone cofactor E-like protein (424 aa).

S18 and S41 each carry phosphoserine. LRR repeat units lie at residues 73–98, 99–123, 124–147, 150–172, 173–197, 199–224, and 226–250; these read CAHV…IVSN, VPQL…TCAG, SFSG…HMIL, LPDL…PSIC, CHSL…KLGV, FPSL…SLAR, and FPNL…KLNS. The 42-residue stretch at 262–303 folds into the LRRCT domain; it reads IPLLQPYTTEERRKLVIARLPSVSKLNGSVVTDGEREDSERF. Residues 334-424 enclose the Ubiquitin-like domain; sequence AEVDLRPQSS…DKIYVESKTK (91 aa). A coiled-coil region spans residues 349 to 375; sequence HFNDQVEEMSIRLDQTVAELKKQLKTL.

As to expression, abundantly expressed in testis, but is also present in several tissues at a much lower level.

It localises to the cytoplasm. It is found in the cytoskeleton. Its function is as follows. Acts as a regulator of tubulin stability. The chain is Tubulin-specific chaperone cofactor E-like protein (TBCEL) from Homo sapiens (Human).